A 534-amino-acid chain; its full sequence is uncharacterized protein (534 aa).

The next 2 membrane-spanning stretches (helical) occupy residues I149–I169 and V185–F205.

Its subcellular location is the cell membrane. This is an uncharacterized protein from Mycoplasma pneumoniae (strain ATCC 29342 / M129 / Subtype 1) (Mycoplasmoides pneumoniae).